A 525-amino-acid chain; its full sequence is Glutamate--cysteine ligase (525 aa).

It belongs to the glutamate--cysteine ligase type 1 family. Type 1 subfamily.

The enzyme catalyses L-cysteine + L-glutamate + ATP = gamma-L-glutamyl-L-cysteine + ADP + phosphate + H(+). It functions in the pathway sulfur metabolism; glutathione biosynthesis; glutathione from L-cysteine and L-glutamate: step 1/2. In Vibrio vulnificus (strain CMCP6), this protein is Glutamate--cysteine ligase.